The sequence spans 304 residues: PHO85 cyclin-9 (304 aa).

One can recognise a Cyclin N-terminal domain in the interval 19 to 146 (EMIQFLATST…LLEYLNWDVR (128 aa)).

It belongs to the cyclin family. PCL1,2 subfamily. As to quaternary structure, forms a cyclin-CDK complex with PHO85.

In terms of biological role, m/G1-specific cyclin partner of the cyclin-dependent kinase (CDK) PHO85. May have a role in bud site selection in G1 phase. This Saccharomyces cerevisiae (strain ATCC 204508 / S288c) (Baker's yeast) protein is PHO85 cyclin-9 (PCL9).